The sequence spans 159 residues: Phosphopantetheine adenylyltransferase (159 aa).

Thr-10 is a substrate binding site. ATP-binding positions include 10–11 and His-18; that span reads TF. Substrate-binding residues include Lys-42, Leu-73, and Arg-87. ATP is bound by residues 88 to 90, Glu-98, and 123 to 129; these read GLR and YSYVSGT.

This sequence belongs to the bacterial CoaD family. As to quaternary structure, homohexamer. Mg(2+) is required as a cofactor.

The protein resides in the cytoplasm. It carries out the reaction (R)-4'-phosphopantetheine + ATP + H(+) = 3'-dephospho-CoA + diphosphate. The protein operates within cofactor biosynthesis; coenzyme A biosynthesis; CoA from (R)-pantothenate: step 4/5. Its function is as follows. Reversibly transfers an adenylyl group from ATP to 4'-phosphopantetheine, yielding dephospho-CoA (dPCoA) and pyrophosphate. In Coxiella burnetii (strain CbuK_Q154) (Coxiella burnetii (strain Q154)), this protein is Phosphopantetheine adenylyltransferase.